The sequence spans 447 residues: Coagulation factor VII (447 aa).

A signal peptide spans 1-23 (MLSQAWALALLCFLLSLWGSLPA). The propeptide occupies 24–40 (VFLPQEQALSILHRPRR). The 45-residue stretch at 41–85 (ANGFLEELLPGSLERECREELCSFEEAHEIFRNEERTRQFWVSYN) folds into the Gla domain. 4-carboxyglutamate occurs at positions 46, 47, 54, 56, 59, 60, 65, 66, 69, 74, and 75. A disulfide bridge connects residues C57 and C62. The EGF-like 1; calcium-binding domain occupies 86-122 (DGDQCASSPCQNGGSCEDQLRSYICFCPDGFEGRNCE). Intrachain disulfides connect C90-C101, C95-C110, C112-C121, C131-C142, C138-C152, C154-C167, C175-C302, C199-C204, C218-C234, and C350-C369. S92 carries an O-linked (Glc...) serine glycan. S92 is a glycosylation site (O-linked (Glc...) serine; alternate). The O-linked (Xyl...) serine; alternate glycan is linked to S92. O-linked (Fuc) serine glycosylation occurs at S100. The EGF-like 2 domain occupies 127–168 (SQLICANDNGGCEQYCGADPGAGRFCWCHEGYALQADGVSCA). N-linked (GlcNAc...) asparagine glycosylation is present at N185. One can recognise a Peptidase S1 domain in the interval 193 to 432 (IVGGHVCPKG…YTAWLRQLMG (240 aa)). Catalysis depends on H233, which acts as the Charge relay system. N243 carries an N-linked (GlcNAc...) asparagine glycan. The active-site Charge relay system is the D282. D378 provides a ligand contact to substrate. C380 and C408 are disulfide-bonded. Residue S384 is the Charge relay system of the active site.

This sequence belongs to the peptidase S1 family. As to quaternary structure, heterodimer of a light chain and a heavy chain linked by a disulfide bond. Post-translationally, the vitamin K-dependent, enzymatic carboxylation of some glutamate residues allows the modified protein to bind calcium. In terms of processing, O-glycosylated. O-fucosylated by POFUT1 on a conserved serine or threonine residue found in the consensus sequence C2-X(4,5)-[S/T]-C3 of EGF domains, where C2 and C3 are the second and third conserved cysteines. Can be either O-glucosylated or O-xylosylated at Ser-92 by POGLUT1. Plasma.

The protein localises to the secreted. It catalyses the reaction Selective cleavage of Arg-|-Ile bond in factor X to form factor Xa.. Functionally, initiates the extrinsic pathway of blood coagulation. Serine protease that circulates in the blood in a zymogen form. Factor VII is converted to factor VIIa by factor Xa, factor XIIa, factor IXa, or thrombin by minor proteolysis. In the presence of tissue factor and calcium ions, factor VIIa then converts factor X to factor Xa by limited proteolysis. Factor VIIa also converts factor IX to factor IXa in the presence of tissue factor and calcium. The protein is Coagulation factor VII (F7) of Bos taurus (Bovine).